A 679-amino-acid chain; its full sequence is DNA-directed RNA polymerase subunit beta' (679 aa).

4 residues coordinate Zn(2+): C69, C71, C87, and C90. Residues D489, D491, and D493 each coordinate Mg(2+).

It belongs to the RNA polymerase beta' chain family. RpoC1 subfamily. As to quaternary structure, in plastids the minimal PEP RNA polymerase catalytic core is composed of four subunits: alpha, beta, beta', and beta''. When a (nuclear-encoded) sigma factor is associated with the core the holoenzyme is formed, which can initiate transcription. Requires Mg(2+) as cofactor. Zn(2+) is required as a cofactor.

Its subcellular location is the plastid. The protein resides in the chloroplast. The enzyme catalyses RNA(n) + a ribonucleoside 5'-triphosphate = RNA(n+1) + diphosphate. DNA-dependent RNA polymerase catalyzes the transcription of DNA into RNA using the four ribonucleoside triphosphates as substrates. The polypeptide is DNA-directed RNA polymerase subunit beta' (Phalaenopsis aphrodite subsp. formosana (Moth orchid)).